The following is a 538-amino-acid chain: MFRQNLITSAILLMAPLAFSAQSLAESLTVEQRLELLEKALRETQSELKKYKDEEKKKYTPATVNRSVSTNDQGYAANPFPTSSAAKPDAVLVKNEEKNASETGSIYSSMTLKDFSKFVKDEIGFSYNGYYRSGWGTASHGSPKSWAIGSLGRFGNEYSGWFDLQLKQRVYNENGKRVDAVVMIDGNVGQQYSTGWFGDNAGGENFMQFSDMYVTTKGFLPFAPEADFWVGKHGAPKIEIQMLDWKTQRTDAAAGVGLENWKVGPGKIDIALVREDVDDYDRSLQNKQQINTHTIDLRYKDIPLWDKATLMVSGRYVTANESASEKDNQDNNGYYDWKDTWMFGTSLTQKFDKGGFNEFSFLVANNSIARNFGRYAGASPFTTFNGRYYGDHTGGTAVRLTSQGEAYIGDHFIVANAIVYSFGNNIYSYETGAHSDFESIRAVVRPAYIWDQYNQTGVELGYFTQQNKDANSNKFNESGYKTTLFHTFKVNTSMLTSRLEIRFYATYIKALENELDGFTFEDNKDAQFAVGAQAEIWW.

An N-terminal signal peptide occupies residues 1 to 25 (MFRQNLITSAILLMAPLAFSAQSLA). A disordered region spans residues 52 to 82 (KDEEKKKYTPATVNRSVSTNDQGYAANPFPT). Residues 62 to 73 (ATVNRSVSTNDQ) show a composition bias toward polar residues.

The protein belongs to the porin LamB (TC 1.B.3) family.

The protein resides in the cell outer membrane. In terms of biological role, may be a sugar porin with a broad carbohydrate specificity. This is Putative outer membrane porin BglH (bglH) from Shigella flexneri.